We begin with the raw amino-acid sequence, 428 residues long: Adenylosuccinate synthetase (428 aa).

GTP contacts are provided by residues 12-18 and 40-42; these read GDEGKGK and GHT. The active-site Proton acceptor is aspartate 13. Aspartate 13 and glycine 40 together coordinate Mg(2+). Residues 13–16, 38–41, threonine 130, arginine 144, glutamine 225, threonine 240, and arginine 304 each bind IMP; these read DEGK and NAGH. Histidine 41 acts as the Proton donor in catalysis. A substrate-binding site is contributed by 300–306; sequence TTTGRPR. Residues arginine 306, 332–334, and 414–416 contribute to the GTP site; these read KLD and SVG.

It belongs to the adenylosuccinate synthetase family. Homodimer. Mg(2+) is required as a cofactor.

It localises to the cytoplasm. The enzyme catalyses IMP + L-aspartate + GTP = N(6)-(1,2-dicarboxyethyl)-AMP + GDP + phosphate + 2 H(+). It participates in purine metabolism; AMP biosynthesis via de novo pathway; AMP from IMP: step 1/2. Plays an important role in the de novo pathway of purine nucleotide biosynthesis. Catalyzes the first committed step in the biosynthesis of AMP from IMP. The polypeptide is Adenylosuccinate synthetase (Caldanaerobacter subterraneus subsp. tengcongensis (strain DSM 15242 / JCM 11007 / NBRC 100824 / MB4) (Thermoanaerobacter tengcongensis)).